The primary structure comprises 555 residues: Glucose-6-phosphate isomerase (555 aa).

Glu-365 functions as the Proton donor in the catalytic mechanism. Residues His-396 and Lys-522 contribute to the active site.

Belongs to the GPI family.

It is found in the cytoplasm. It carries out the reaction alpha-D-glucose 6-phosphate = beta-D-fructose 6-phosphate. Its pathway is carbohydrate biosynthesis; gluconeogenesis. The protein operates within carbohydrate degradation; glycolysis; D-glyceraldehyde 3-phosphate and glycerone phosphate from D-glucose: step 2/4. In terms of biological role, catalyzes the reversible isomerization of glucose-6-phosphate to fructose-6-phosphate. This is Glucose-6-phosphate isomerase from Psychrobacter cryohalolentis (strain ATCC BAA-1226 / DSM 17306 / VKM B-2378 / K5).